Consider the following 251-residue polypeptide: Imidazole glycerol phosphate synthase subunit HisF (251 aa).

Active-site residues include aspartate 11 and aspartate 130.

The protein belongs to the HisA/HisF family. As to quaternary structure, heterodimer of HisH and HisF.

It is found in the cytoplasm. It carries out the reaction 5-[(5-phospho-1-deoxy-D-ribulos-1-ylimino)methylamino]-1-(5-phospho-beta-D-ribosyl)imidazole-4-carboxamide + L-glutamine = D-erythro-1-(imidazol-4-yl)glycerol 3-phosphate + 5-amino-1-(5-phospho-beta-D-ribosyl)imidazole-4-carboxamide + L-glutamate + H(+). It functions in the pathway amino-acid biosynthesis; L-histidine biosynthesis; L-histidine from 5-phospho-alpha-D-ribose 1-diphosphate: step 5/9. Functionally, IGPS catalyzes the conversion of PRFAR and glutamine to IGP, AICAR and glutamate. The HisF subunit catalyzes the cyclization activity that produces IGP and AICAR from PRFAR using the ammonia provided by the HisH subunit. This is Imidazole glycerol phosphate synthase subunit HisF from Chlorobium limicola (strain DSM 245 / NBRC 103803 / 6330).